A 69-amino-acid chain; its full sequence is Neurotoxin Cex5 (69 aa).

Alanine 1 is a signal peptide. The LCN-type CS-alpha/beta domain occupies 2–67; that stretch reads KDGYLVSKST…TYPIPGKSCG (66 aa). Cystine bridges form between cysteine 13/cysteine 66, cysteine 17/cysteine 42, cysteine 26/cysteine 47, and cysteine 30/cysteine 49. Cysteine 66 carries the post-translational modification Cysteine amide. Residues 67-69 constitute a propeptide that is removed on maturation; it reads GKK.

The protein belongs to the long (4 C-C) scorpion toxin superfamily. Sodium channel inhibitor family. Beta subfamily. Expressed by the venom gland.

It is found in the secreted. Functionally, beta toxins bind voltage-independently at site-4 of sodium channels (Nav) and shift the voltage of activation toward more negative potentials thereby affecting sodium channel activation and promoting spontaneous and repetitive firing. The protein is Neurotoxin Cex5 of Centruroides exilicauda (Bark scorpion).